The chain runs to 167 residues: 3-isopropylmalate dehydratase small subunit (167 aa).

Belongs to the LeuD family. LeuD type 2 subfamily. Heterodimer of LeuC and LeuD.

The catalysed reaction is (2R,3S)-3-isopropylmalate = (2S)-2-isopropylmalate. Its pathway is amino-acid biosynthesis; L-leucine biosynthesis; L-leucine from 3-methyl-2-oxobutanoate: step 2/4. Functionally, catalyzes the isomerization between 2-isopropylmalate and 3-isopropylmalate, via the formation of 2-isopropylmaleate. The sequence is that of 3-isopropylmalate dehydratase small subunit from Nitratidesulfovibrio vulgaris (strain ATCC 29579 / DSM 644 / CCUG 34227 / NCIMB 8303 / VKM B-1760 / Hildenborough) (Desulfovibrio vulgaris).